The primary structure comprises 816 residues: Leucine--tRNA ligase (816 aa).

Positions 40–51 (SYPSGSQLHAGH) match the 'HIGH' region motif. A 'KMSKS' region motif is present at residues 576–580 (KMSKS). Lys579 contributes to the ATP binding site.

Belongs to the class-I aminoacyl-tRNA synthetase family.

It localises to the cytoplasm. It catalyses the reaction tRNA(Leu) + L-leucine + ATP = L-leucyl-tRNA(Leu) + AMP + diphosphate. This is Leucine--tRNA ligase from Clostridium perfringens (strain ATCC 13124 / DSM 756 / JCM 1290 / NCIMB 6125 / NCTC 8237 / Type A).